We begin with the raw amino-acid sequence, 149 residues long: Protegrin-3 (149 aa).

The signal sequence occupies residues 1–29 (METQRASLCLGRWSLWLLLLALVVPSASA). The propeptide occupies 30–130 (QALSYREAVL…DITCNEVQGV (101 aa)). The tract at residues 61–80 (DQPPKADEDPGTPKPVSFTV) is disordered. 4 disulfide bridges follow: Cys-85–Cys-96, Cys-107–Cys-124, Cys-136–Cys-145, and Cys-138–Cys-143. An Arginine amide modification is found at Arg-148.

Belongs to the cathelicidin family.

The protein resides in the secreted. In terms of biological role, microbicidal activity. Active against E.coli, Listeria monocytogenes and C.albicans, in vitro. This Sus scrofa (Pig) protein is Protegrin-3 (NPG3).